The primary structure comprises 373 residues: NAD(P)H-quinone oxidoreductase subunit 1 (373 aa).

A run of 8 helical transmembrane segments spans residues 28–48, 98–118, 129–149, 177–197, 205–225, 267–287, 309–329, and 348–368; these read LLWL…GVLV, LLFT…WLII, VGVG…GLLM, LALA…VDIV, ILSW…ICAL, VLSA…PIPV, TVGI…AILL, and FLLP…LAFP.

This sequence belongs to the complex I subunit 1 family. As to quaternary structure, NDH-1 is composed of at least 11 different subunits.

Its subcellular location is the cellular thylakoid membrane. It carries out the reaction a plastoquinone + NADH + (n+1) H(+)(in) = a plastoquinol + NAD(+) + n H(+)(out). The enzyme catalyses a plastoquinone + NADPH + (n+1) H(+)(in) = a plastoquinol + NADP(+) + n H(+)(out). In terms of biological role, NDH-1 shuttles electrons from an unknown electron donor, via FMN and iron-sulfur (Fe-S) centers, to quinones in the respiratory and/or the photosynthetic chain. The immediate electron acceptor for the enzyme in this species is believed to be plastoquinone. Couples the redox reaction to proton translocation, and thus conserves the redox energy in a proton gradient. The polypeptide is NAD(P)H-quinone oxidoreductase subunit 1 (Synechococcus sp. (strain CC9605)).